Consider the following 252-residue polypeptide: 3-dehydroquinate dehydratase (252 aa).

3-dehydroquinate contacts are provided by residues S21, 46 to 48 (EWR), and R82. The active-site Proton donor/acceptor is the H143. K170 serves as the catalytic Schiff-base intermediate with substrate. 3-dehydroquinate is bound by residues R213, S232, and Q236.

It belongs to the type-I 3-dehydroquinase family. As to quaternary structure, homodimer.

The catalysed reaction is 3-dehydroquinate = 3-dehydroshikimate + H2O. It functions in the pathway metabolic intermediate biosynthesis; chorismate biosynthesis; chorismate from D-erythrose 4-phosphate and phosphoenolpyruvate: step 3/7. Involved in the third step of the chorismate pathway, which leads to the biosynthesis of aromatic amino acids. Catalyzes the cis-dehydration of 3-dehydroquinate (DHQ) and introduces the first double bond of the aromatic ring to yield 3-dehydroshikimate. The chain is 3-dehydroquinate dehydratase from Salmonella choleraesuis (strain SC-B67).